The following is a 258-amino-acid chain: UBX domain-containing protein 2A (258 aa).

Positions 1 to 14 (MKEVDNLDSIKEEW) are enriched in basic and acidic residues. The interval 1 to 30 (MKEVDNLDSIKEEWACETGPPDSQPLNDNQ) is disordered. Positions 1 to 152 (MKEVDNLDSI…SATPRIVSKA (152 aa)) are required for interaction with CHRNA3. Residues 1 to 165 (MKEVDNLDSI…EVDNKSTLSA (165 aa)) form a required for inhibition of CHRNA3 ubiquitination and translocation of CHRNA3 to the plasma membrane resulting in an increase in acetylcholine-gated nicotinic acetylcholine receptor currents region. An SEP domain is found at 61-125 (QVDVNIKLWK…VEDKKNEVCM (65 aa)). The segment at 168-258 (LNNLEPITRI…QKTAEPFRKL (91 aa)) is required for interaction with VCP. Residues 170 to 247 (NLEPITRIQI…DLKNAVIIQR (78 aa)) enclose the UBX domain.

In terms of assembly, part of a complex composed of STUB1/CHIP, VCP/p97, CHRNA3, and UBXN2A that modulates the ubiquitination and endoplasmic reticulum-associated degradation (ERAD) of CHRNA3. Within the complex UBXN2A acts as a scaffold protein required for the interaction of CHRNA3 with VCP/p97, this interaction also inhibits CHRNA3 ubiquitination by STUB1/CHIP and subsequently ERAD. Interacts (via SEP domain) with CHRNA3 and interacts (via UBX domain) with VCP/P97; these interactions are required for the interaction of CHRNA3 with the STUB1-VCP-UBXN2A complex. Interacts with HSPA9/MOT-2 (via SBD domain); the interaction inhibits HSPA9/MOT-2 interaction with and degradation of p53, thereby promotes p53 translocation to the nucleus. Interacts with RICTOR. In terms of processing, ubiquitinated. In terms of tissue distribution, expressed in the prefrontal cortex (at protein level). Expressed in the habenula and hippocampus (at protein level). Expressed in peripheral ganglia.

The protein localises to the golgi apparatus. The protein resides in the endoplasmic reticulum. It localises to the perikaryon. Its subcellular location is the cell projection. It is found in the dendrite. The protein localises to the nucleus. The protein resides in the cytoplasm. Its function is as follows. Acts to repress the ubiquitination and subsequent endoplasmic reticulum-associated degradation of CHRNA3 by the STUB1-VCP-UBXN2A complex in cortical neurons. Also acts to promote the translocation of CHRNA3 to the plasma membrane and subsequently increases plasma membrane acetylcholine-gated ion-channel activation. Plays a role in the inhibition of STUB1-mediated TP53 degradation, via its interaction with HSPA9 which acts to inhibit TP53 binding to HSPA9. Positively mediates the ubiquitination and proteosomal degradation of RICTOR, may thereby act as a negative regulator of the mTORC2 pathway. The chain is UBX domain-containing protein 2A from Mus musculus (Mouse).